The following is a 142-amino-acid chain: Hemoglobin subunit alpha (142 aa).

S1 is subject to N-acetylserine. A Globin domain is found at 1 to 142; it reads SLTAKSKSIV…VASALSEKYR (142 aa). H59 serves as a coordination point for O2. H88 is a binding site for heme b.

The protein belongs to the globin family. Heterotetramer of two alpha chains and two beta chains. As to expression, red blood cells.

Involved in oxygen transport from gills to the various peripheral tissues. In Electrophorus electricus (Electric eel), this protein is Hemoglobin subunit alpha (hba).